We begin with the raw amino-acid sequence, 266 residues long: Indole-3-glycerol phosphate synthase (266 aa).

This sequence belongs to the TrpC family.

It catalyses the reaction 1-(2-carboxyphenylamino)-1-deoxy-D-ribulose 5-phosphate + H(+) = (1S,2R)-1-C-(indol-3-yl)glycerol 3-phosphate + CO2 + H2O. It functions in the pathway amino-acid biosynthesis; L-tryptophan biosynthesis; L-tryptophan from chorismate: step 4/5. In Herminiimonas arsenicoxydans, this protein is Indole-3-glycerol phosphate synthase.